The following is a 479-amino-acid chain: Sulfate adenylyltransferase subunit 1 (479 aa).

In terms of domain architecture, tr-type G spans 25–239 (KSLLRFLTCG…EVLETVDIQR (215 aa)). Residues 34–41 (GSVDDGKS) form a G1 region. 34-41 (GSVDDGKS) lines the GTP pocket. The segment at 92–96 (GITID) is G2. The segment at 113–116 (DTPG) is G3. GTP contacts are provided by residues 113 to 117 (DTPGH) and 168 to 171 (NKMD). Residues 168 to 171 (NKMD) are G4. Residues 206–208 (SAL) are G5.

The protein belongs to the TRAFAC class translation factor GTPase superfamily. Classic translation factor GTPase family. CysN/NodQ subfamily. As to quaternary structure, heterodimer composed of CysD, the smaller subunit, and CysN.

The catalysed reaction is sulfate + ATP + H(+) = adenosine 5'-phosphosulfate + diphosphate. It functions in the pathway sulfur metabolism; hydrogen sulfide biosynthesis; sulfite from sulfate: step 1/3. Its function is as follows. With CysD forms the ATP sulfurylase (ATPS) that catalyzes the adenylation of sulfate producing adenosine 5'-phosphosulfate (APS) and diphosphate, the first enzymatic step in sulfur assimilation pathway. APS synthesis involves the formation of a high-energy phosphoric-sulfuric acid anhydride bond driven by GTP hydrolysis by CysN coupled to ATP hydrolysis by CysD. The sequence is that of Sulfate adenylyltransferase subunit 1 from Salmonella dublin (strain CT_02021853).